Consider the following 777-residue polypeptide: MEQRSSPARSLPPRKTTTTPQLSCELCRKRKVKCDKLTPCTNCAASGTVCVPIYRTRLPRGRHATRPRRVSSPPPTSAPGETDRIIQPSVPVNEDLQERIYRLEALIQGMNSHSHTRTPSATSREQSVQLSDTSTFQTAPNPNTSPILNSSIVSKRLMLQRPDQFWADLVDEIHGLREVVESSLAGGQEGPIPSSDSAKSEPPNDDGIQVLGLGASNPSAALRSMSPLHNPVVARQLCEVYLQQVDPVIKILHRPSLNRWMVQGEPYLSYADGHPAVEALGSAVCYSAISSMTDNQCSVMFHANKADLLAEARVACETAIGRAGLLTTRDITVLQAFVLYLVARRSEDRTPAVWTLIALAVRIGKGLGLYLDPETETFFDQQIRRRLWFTICLMDLQASFGQASEPLISVDESASTALPQHINDSDFDPTTAAHSDPNREGLTDTTFALVTYHAQRTGRLLNFVQHDRKVDGGIPTPTSSTSGTSTSRSRTCDPSWPQQQARHFEQEALRLLHFCDPGTSAYAWFTWHGTQSLIATVRLAAARPLQWHGQAPPPRREGNTELLRLCLPVLEKAQLMHTDPRAEGFRWYVTIPWYALAMALAECYVSSDTALVRYAWPLVESSYLQYEATLGQSLGGPFGQLMRRMKEKLAAPAALPPSSLPSTNWSPATPPTFPGVPRPQSSHDDRHAPGCSWPVPTGSTPPADLGVPSLLPVSTWEALSPPSLDNPSLFGVPPTTTAVADGMDPGADIMWEELFSGIPFNEIAGPDTFFFDMNWGS.

Residues 1-20 are disordered; sequence MEQRSSPARSLPPRKTTTTP. Residues 24-50 constitute a DNA-binding region (zn(2)-C6 fungal-type); it reads CELCRKRKVKCDKLTPCTNCAASGTVC. 6 disordered regions span residues 61–85, 111–144, 182–213, 419–440, 468–496, and 655–699; these read GRHATRPRRVSSPPPTSAPGETDRI, NSHSHTRTPSATSREQSVQLSDTSTFQTAPNPNT, SSLAGGQEGPIPSSDSAKSEPPNDDGIQVLGL, PQHINDSDFDPTTAAHSDPNRE, RKVDGGIPTPTSSTSGTSTSRSRTCDPSW, and LPPS…PTGS. Residues 475–489 are compositionally biased toward low complexity; the sequence is PTPTSSTSGTSTSRS. Positions 668–677 are enriched in pro residues; the sequence is ATPPTFPGVP.

Its subcellular location is the nucleus. In terms of biological role, transcription factor that specifically regulates the expression of the ada gene cluster involved in the biosynthesis of the linear tetracyclic TAN-1612 neuropeptide Y receptor antagonist. This is C6 finger domain transcription factor adaR from Aspergillus niger (strain ATCC MYA-4892 / CBS 513.88 / FGSC A1513).